A 689-amino-acid polypeptide reads, in one-letter code: Glycine--tRNA ligase beta subunit (689 aa).

It belongs to the class-II aminoacyl-tRNA synthetase family. Tetramer of two alpha and two beta subunits.

Its subcellular location is the cytoplasm. It catalyses the reaction tRNA(Gly) + glycine + ATP = glycyl-tRNA(Gly) + AMP + diphosphate. The polypeptide is Glycine--tRNA ligase beta subunit (Salmonella heidelberg (strain SL476)).